Consider the following 362-residue polypeptide: Phosphoserine aminotransferase (362 aa).

L-glutamate contacts are provided by Ser-9 and Arg-42. Pyridoxal 5'-phosphate contacts are provided by residues 76–77 (GR), Trp-102, Thr-153, Asp-174, and Gln-197. Position 198 is an N6-(pyridoxal phosphate)lysine (Lys-198). 239–240 (NT) lines the pyridoxal 5'-phosphate pocket.

It belongs to the class-V pyridoxal-phosphate-dependent aminotransferase family. SerC subfamily. Homodimer. The cofactor is pyridoxal 5'-phosphate.

The protein resides in the cytoplasm. The enzyme catalyses O-phospho-L-serine + 2-oxoglutarate = 3-phosphooxypyruvate + L-glutamate. It catalyses the reaction 4-(phosphooxy)-L-threonine + 2-oxoglutarate = (R)-3-hydroxy-2-oxo-4-phosphooxybutanoate + L-glutamate. It participates in amino-acid biosynthesis; L-serine biosynthesis; L-serine from 3-phospho-D-glycerate: step 2/3. It functions in the pathway cofactor biosynthesis; pyridoxine 5'-phosphate biosynthesis; pyridoxine 5'-phosphate from D-erythrose 4-phosphate: step 3/5. In terms of biological role, catalyzes the reversible conversion of 3-phosphohydroxypyruvate to phosphoserine and of 3-hydroxy-2-oxo-4-phosphonooxybutanoate to phosphohydroxythreonine. The sequence is that of Phosphoserine aminotransferase from Escherichia coli O17:K52:H18 (strain UMN026 / ExPEC).